The sequence spans 309 residues: 2-phospho-L-lactate transferase (309 aa).

Aspartate 48 and lysine 87 together coordinate 7,8-didemethyl-8-hydroxy-5-deazariboflavin.

It belongs to the CofD family. In terms of assembly, homodimer. It depends on Mg(2+) as a cofactor.

The catalysed reaction is (2S)-lactyl-2-diphospho-5'-guanosine + 7,8-didemethyl-8-hydroxy-5-deazariboflavin = oxidized coenzyme F420-0 + GMP + H(+). It functions in the pathway cofactor biosynthesis; coenzyme F420 biosynthesis. In terms of biological role, catalyzes the transfer of the 2-phospholactate moiety from (2S)-lactyl-2-diphospho-5'-guanosine to 7,8-didemethyl-8-hydroxy-5-deazariboflavin (FO) with the formation of oxidized coenzyme F420-0 and GMP. This chain is 2-phospho-L-lactate transferase, found in Methanosarcina barkeri (strain Fusaro / DSM 804).